Consider the following 438-residue polypeptide: 3-phosphoshikimate 1-carboxyvinyltransferase (438 aa).

3-phosphoshikimate-binding residues include K25, S26, and R30. K25 lines the phosphoenolpyruvate pocket. 2 residues coordinate phosphoenolpyruvate: G99 and R128. Residues S173, Q175, D325, and K352 each contribute to the 3-phosphoshikimate site. Position 175 (Q175) interacts with phosphoenolpyruvate. The active-site Proton acceptor is the D325. Positions 356 and 398 each coordinate phosphoenolpyruvate.

It belongs to the EPSP synthase family. As to quaternary structure, monomer.

Its subcellular location is the cytoplasm. It carries out the reaction 3-phosphoshikimate + phosphoenolpyruvate = 5-O-(1-carboxyvinyl)-3-phosphoshikimate + phosphate. It participates in metabolic intermediate biosynthesis; chorismate biosynthesis; chorismate from D-erythrose 4-phosphate and phosphoenolpyruvate: step 6/7. Functionally, catalyzes the transfer of the enolpyruvyl moiety of phosphoenolpyruvate (PEP) to the 5-hydroxyl of shikimate-3-phosphate (S3P) to produce enolpyruvyl shikimate-3-phosphate and inorganic phosphate. In Prochlorococcus marinus (strain MIT 9515), this protein is 3-phosphoshikimate 1-carboxyvinyltransferase.